We begin with the raw amino-acid sequence, 601 residues long: Aspartate--tRNA(Asp/Asn) ligase (601 aa).

E174 provides a ligand contact to L-aspartate. An aspartate region spans residues 198–201 (QLFK). R220 is an L-aspartate binding site. Residues 220-222 (RDE) and Q229 contribute to the ATP site. H459 lines the L-aspartate pocket. E493 is an ATP binding site. R500 is an L-aspartate binding site. 545–548 (GLDR) contributes to the ATP binding site.

The protein belongs to the class-II aminoacyl-tRNA synthetase family. Type 1 subfamily. In terms of assembly, homodimer.

It is found in the cytoplasm. The enzyme catalyses tRNA(Asx) + L-aspartate + ATP = L-aspartyl-tRNA(Asx) + AMP + diphosphate. Functionally, aspartyl-tRNA synthetase with relaxed tRNA specificity since it is able to aspartylate not only its cognate tRNA(Asp) but also tRNA(Asn). Reaction proceeds in two steps: L-aspartate is first activated by ATP to form Asp-AMP and then transferred to the acceptor end of tRNA(Asp/Asn). This chain is Aspartate--tRNA(Asp/Asn) ligase, found in Variovorax paradoxus (strain S110).